The following is a 108-amino-acid chain: Small ribosomal subunit protein uS17 (108 aa).

Residues 1–26 are disordered; it reads MREKMAEATETQASETSTRGRPKTRV. A compositionally biased stretch (low complexity) spans 8 to 17; that stretch reads ATETQASETS.

This sequence belongs to the universal ribosomal protein uS17 family. Part of the 30S ribosomal subunit.

Its function is as follows. One of the primary rRNA binding proteins, it binds specifically to the 5'-end of 16S ribosomal RNA. This Myxococcus xanthus (strain DK1622) protein is Small ribosomal subunit protein uS17.